Consider the following 110-residue polypeptide: MSLTEARFHELIDDLQQNVEDVFEDSDLDVDLENSAGVLSVRFENGSQLILSRQEPLRQLWLAARSGGFHFDYDEAGGRWICDASGDSLGELLARVTLEQIGEELEFPEL.

It belongs to the frataxin family.

Its function is as follows. Involved in iron-sulfur (Fe-S) cluster assembly. May act as a regulator of Fe-S biogenesis. The polypeptide is Iron-sulfur cluster assembly protein CyaY (Azotobacter vinelandii (strain DJ / ATCC BAA-1303)).